Here is a 260-residue protein sequence, read N- to C-terminus: Pyridoxine 5'-phosphate synthase (260 aa).

Residues N10 and R21 each contribute to the 3-amino-2-oxopropyl phosphate site. The Proton acceptor role is filled by H46. Residues R48 and H53 each contribute to the 1-deoxy-D-xylulose 5-phosphate site. Residue E76 is the Proton acceptor of the active site. T113 contributes to the 1-deoxy-D-xylulose 5-phosphate binding site. The active-site Proton donor is H204. 3-amino-2-oxopropyl phosphate contacts are provided by residues D205 and 227-228; that span reads GH.

The protein belongs to the PNP synthase family. As to quaternary structure, homooctamer; tetramer of dimers.

Its subcellular location is the cytoplasm. The enzyme catalyses 3-amino-2-oxopropyl phosphate + 1-deoxy-D-xylulose 5-phosphate = pyridoxine 5'-phosphate + phosphate + 2 H2O + H(+). Its pathway is cofactor biosynthesis; pyridoxine 5'-phosphate biosynthesis; pyridoxine 5'-phosphate from D-erythrose 4-phosphate: step 5/5. In terms of biological role, catalyzes the complicated ring closure reaction between the two acyclic compounds 1-deoxy-D-xylulose-5-phosphate (DXP) and 3-amino-2-oxopropyl phosphate (1-amino-acetone-3-phosphate or AAP) to form pyridoxine 5'-phosphate (PNP) and inorganic phosphate. In Xylella fastidiosa (strain M23), this protein is Pyridoxine 5'-phosphate synthase.